The following is a 271-amino-acid chain: Ribosomal RNA small subunit methyltransferase A (271 aa).

S-adenosyl-L-methionine contacts are provided by H11, L13, G38, E58, D86, and N101.

It belongs to the class I-like SAM-binding methyltransferase superfamily. rRNA adenine N(6)-methyltransferase family. RsmA subfamily.

It is found in the cytoplasm. The catalysed reaction is adenosine(1518)/adenosine(1519) in 16S rRNA + 4 S-adenosyl-L-methionine = N(6)-dimethyladenosine(1518)/N(6)-dimethyladenosine(1519) in 16S rRNA + 4 S-adenosyl-L-homocysteine + 4 H(+). Functionally, specifically dimethylates two adjacent adenosines (A1518 and A1519) in the loop of a conserved hairpin near the 3'-end of 16S rRNA in the 30S particle. May play a critical role in biogenesis of 30S subunits. The polypeptide is Ribosomal RNA small subunit methyltransferase A (Helicobacter pylori (strain ATCC 700392 / 26695) (Campylobacter pylori)).